Reading from the N-terminus, the 137-residue chain is Ribosome-binding factor A (137 aa).

Positions 114 to 137 (QLIDEARAEDRELRPEDDETGNNE) are disordered. A compositionally biased stretch (basic and acidic residues) spans 117-127 (DEARAEDRELR). The span at 128 to 137 (PEDDETGNNE) shows a compositional bias: acidic residues.

This sequence belongs to the RbfA family. As to quaternary structure, monomer. Binds 30S ribosomal subunits, but not 50S ribosomal subunits or 70S ribosomes.

It is found in the cytoplasm. Functionally, one of several proteins that assist in the late maturation steps of the functional core of the 30S ribosomal subunit. Associates with free 30S ribosomal subunits (but not with 30S subunits that are part of 70S ribosomes or polysomes). Required for efficient processing of 16S rRNA. May interact with the 5'-terminal helix region of 16S rRNA. The chain is Ribosome-binding factor A from Alcanivorax borkumensis (strain ATCC 700651 / DSM 11573 / NCIMB 13689 / SK2).